The following is a 1366-amino-acid chain: DNA-directed RNA polymerase subunit beta'' (1366 aa).

The Zn(2+) site is built by Cys-220, Cys-290, Cys-297, and Cys-300.

Belongs to the RNA polymerase beta' chain family. RpoC2 subfamily. In plastids the minimal PEP RNA polymerase catalytic core is composed of four subunits: alpha, beta, beta', and beta''. When a (nuclear-encoded) sigma factor is associated with the core the holoenzyme is formed, which can initiate transcription. Requires Zn(2+) as cofactor.

Its subcellular location is the plastid. The protein localises to the chloroplast. It carries out the reaction RNA(n) + a ribonucleoside 5'-triphosphate = RNA(n+1) + diphosphate. In terms of biological role, DNA-dependent RNA polymerase catalyzes the transcription of DNA into RNA using the four ribonucleoside triphosphates as substrates. This Lemna minor (Common duckweed) protein is DNA-directed RNA polymerase subunit beta''.